We begin with the raw amino-acid sequence, 284 residues long: D-tagatose-1,6-bisphosphate aldolase subunit GatY (284 aa).

Catalysis depends on aspartate 82, which acts as the Proton donor. 2 residues coordinate Zn(2+): histidine 83 and histidine 180. Position 181 (glycine 181) interacts with dihydroxyacetone phosphate. Histidine 208 serves as a coordination point for Zn(2+). Residues 209–211 and 230–233 each bind dihydroxyacetone phosphate; these read GAS and NVAT.

It belongs to the class II fructose-bisphosphate aldolase family. TagBP aldolase GatY subfamily. In terms of assembly, forms a complex with GatZ. Zn(2+) serves as cofactor.

The enzyme catalyses D-tagatofuranose 1,6-bisphosphate = D-glyceraldehyde 3-phosphate + dihydroxyacetone phosphate. The protein operates within carbohydrate metabolism; D-tagatose 6-phosphate degradation; D-glyceraldehyde 3-phosphate and glycerone phosphate from D-tagatose 6-phosphate: step 2/2. Functionally, catalytic subunit of the tagatose-1,6-bisphosphate aldolase GatYZ, which catalyzes the reversible aldol condensation of dihydroxyacetone phosphate (DHAP or glycerone-phosphate) with glyceraldehyde 3-phosphate (G3P) to produce tagatose 1,6-bisphosphate (TBP). Requires GatZ subunit for full activity and stability. Is involved in the catabolism of galactitol. This chain is D-tagatose-1,6-bisphosphate aldolase subunit GatY, found in Shigella dysenteriae serotype 1 (strain Sd197).